The chain runs to 125 residues: Prefoldin subunit beta (125 aa).

It belongs to the prefoldin subunit beta family. Heterohexamer of two alpha and four beta subunits.

The protein resides in the cytoplasm. Functionally, molecular chaperone capable of stabilizing a range of proteins. Seems to fulfill an ATP-independent, HSP70-like function in archaeal de novo protein folding. The polypeptide is Prefoldin subunit beta (Sulfolobus acidocaldarius (strain ATCC 33909 / DSM 639 / JCM 8929 / NBRC 15157 / NCIMB 11770)).